An 861-amino-acid chain; its full sequence is Rod cGMP-specific 3',5'-cyclic phosphodiesterase subunit alpha (861 aa).

An N-acetylglycine modification is found at G2. GAF domains follow at residues 73–222 (QAER…NLIM) and 254–431 (DIER…GWSV). The PDEase domain maps to 483–816 (EEEELAEILQ…KEWKALADEY (334 aa)). H559 (proton donor) is an active-site residue. The a divalent metal cation site is built by H563, H599, D600, and D720. The tract at residues 821–861 (KALEEEKQKQQTAKQGAAGDQPGGNPSPAGGAPASKSCCIQ) is disordered. Over residues 830-861 (QQTAKQGAAGDQPGGNPSPAGGAPASKSCCIQ) the composition is skewed to low complexity. At C858 the chain carries Cysteine methyl ester. A lipid anchor (S-farnesyl cysteine) is attached at C858. The propeptide at 859–861 (CIQ) is removed in mature form.

The protein belongs to the cyclic nucleotide phosphodiesterase family. As to quaternary structure, oligomer composed of two catalytic chains (alpha and beta), an inhibitory chain (gamma) and the delta chain. Requires a divalent metal cation as cofactor.

Its subcellular location is the cell membrane. It is found in the cell projection. It localises to the cilium. The protein resides in the photoreceptor outer segment. The enzyme catalyses 3',5'-cyclic GMP + H2O = GMP + H(+). Functionally, rod-specific cGMP phosphodiesterase that catalyzes the hydrolysis of 3',5'-cyclic GMP. This protein participates in processes of transmission and amplification of the visual signal. The chain is Rod cGMP-specific 3',5'-cyclic phosphodiesterase subunit alpha from Canis lupus familiaris (Dog).